The chain runs to 340 residues: Uroporphyrinogen decarboxylase (340 aa).

Substrate contacts are provided by residues 21-25, D71, Y148, S203, and H316; that span reads RQAGR.

It belongs to the uroporphyrinogen decarboxylase family. In terms of assembly, homodimer.

It is found in the cytoplasm. It catalyses the reaction uroporphyrinogen III + 4 H(+) = coproporphyrinogen III + 4 CO2. It functions in the pathway porphyrin-containing compound metabolism; protoporphyrin-IX biosynthesis; coproporphyrinogen-III from 5-aminolevulinate: step 4/4. Functionally, catalyzes the decarboxylation of four acetate groups of uroporphyrinogen-III to yield coproporphyrinogen-III. This Campylobacter lari (strain RM2100 / D67 / ATCC BAA-1060) protein is Uroporphyrinogen decarboxylase.